A 59-amino-acid polypeptide reads, in one-letter code: UPF0391 membrane protein LPC_1949 (59 aa).

2 helical membrane-spanning segments follow: residues Ala-5–Val-25 and Ile-30–Leu-50.

The protein belongs to the UPF0391 family.

The protein resides in the cell membrane. The chain is UPF0391 membrane protein LPC_1949 from Legionella pneumophila (strain Corby).